The chain runs to 72 residues: Lantibiotic Flvbeta.e (72 aa).

A propeptide spans 1–34 (cleaved by FlvT); it reads MNNKEFNMEQFKKLAAVVSEDELDEMLDENVTGA. The segment at residues 36–40 is a cross-link (lanthionine (Ser-Cys); by FlvM2); it reads SSIPC. Residue Ser-37 is modified to 2,3-didehydroalanine (Ser); by FlvM2. 2,3-didehydrobutyrine; by FlvM2 is present on residues Thr-48 and Thr-49. 3 consecutive cross-links (beta-methyllanthionine (Thr-Cys); by FlvM2) follow at residues 55-61, 63-66, and 67-70; these read TTGFDWC, TGAC, and TTSC.

In terms of processing, contains LL-lanthionine and DL-beta-methyllanthionine, when coepressed in E.coli with the flavecin synthetase FlvM2.

It localises to the secreted. Functionally, lanthionine-containing peptide antibiotic (lantibiotic) that is probably active on Gram-positive bacteria, since its analog [Del1]Flvbeta.e shows antibacterial activity against Gram-positive bacteria. This activity is not synergistically enhanced by [Del2]Flvalpha.a, an analog of Flvalpha.a, which is encoded by the same operon than Flvbeta.e. The bactericidal activity of lantibiotics is based on depolarization of energized bacterial cytoplasmic membranes, initiated by the formation of aqueous transmembrane pores. The polypeptide is Lantibiotic Flvbeta.e (Ruminococcus flavefaciens).